The following is a 1409-amino-acid chain: Mediator of RNA polymerase II transcription subunit 23 (1409 aa).

The segment at 1359 to 1409 is disordered; it reads ASAAGQGPAQGGPQSQQPQTTGQAGGQPSVPQQQQQTQQQQPQQQQQVQQQ.

Belongs to the Mediator complex subunit 23 family. Component of the Mediator complex.

It localises to the nucleus. Component of the Mediator complex, a coactivator involved in the regulated transcription of nearly all RNA polymerase II-dependent genes. Mediator functions as a bridge to convey information from gene-specific regulatory proteins to the basal RNA polymerase II transcription machinery. Mediator is recruited to promoters by direct interactions with regulatory proteins and serves as a scaffold for the assembly of a functional preinitiation complex with RNA polymerase II and the general transcription factors. In Aedes aegypti (Yellowfever mosquito), this protein is Mediator of RNA polymerase II transcription subunit 23 (MED23).